Consider the following 93-residue polypeptide: Large ribosomal subunit protein bL27 (93 aa).

Residues 1–9 constitute a propeptide that is removed on maturation; the sequence is MLQLNLQFF. The segment at 14–33 is disordered; sequence GVGSTKNGRDSISKRLGAKR.

The protein belongs to the bacterial ribosomal protein bL27 family. The N-terminus is cleaved by ribosomal processing cysteine protease Prp.

In Exiguobacterium sp. (strain ATCC BAA-1283 / AT1b), this protein is Large ribosomal subunit protein bL27.